Consider the following 1141-residue polypeptide: MNIQERFSLRKSAVGLVSVSLLCAIYTSTVAADTVVTGVNEIIEESQVKDEVSIESEKNESLDGSNIEIVEEIADNIPSPVIAEGEVAVEMKVDRGTENVVSRNDTEVTTSEQNQIEVTETKEILNQTSYQTESGEQRQIIWAHGITPPAMEQSGGFVKEKYGDYLNYTAPFEAGKGYYDTNKSLNASFIDLNLCFAAVSSNMVHWWLEQNSSYVERYLKEKKGTVNVEENYAITDLRRYINSFQNQQNSRVFDMFKTYYGYRTNGFVSDALVDLFINGYKPKAQGGVNLEDSQLVPDSRGGFFYDVFKEKKLTNRIFSGSYERFGEDVRTVLESKGLLGLTYRTLGYATHIVTVWGAEYDNQGKIKAVYITDSDDQQEQIGLKRMGITRDASGNPRLNNHMKNNSAGALLDYVHTIRLGQDLWEEYFNPLAKAKETASQTLADTKKALDLSIQGQSELPESMRLIYLEKLNNLYNQGILSIQKAESSEMLSGALENGLNSLKSLDFPISEVGNALAPDLPVGDRSTVSDVDSLSSQETSSTNLEADTENAGIIADGTNQLHFPVEAQTTSSVEAEGDNVFEQEADTLPIIIENKDEFGSELSRNMQTSETDSLVVAVEEDVKNDEVAQVEELLESEKVENQSSELLSDTLIVESANDKEEDRVEAVVSEQPDSIPHQNVEISLVEPTNVETETVVTPINDAATPHGSPTYIDNSVTESVATPLEKDSIQAGETEIAEPTSSESTNVETETVVTPVNDVATPHGSPTYIDNSVTESVATPLEKDSIQAGETEIAEPTSSESTNVETETVVTPVNDVATPHGSPTYIDNSVTESVATPLEKDSIQAGETEIAEPTSSESTSVEAELVDNSEIHAATSSVTPCGSSAYADGSTTESVATPLEKDSIQTGNTEIAEPTSSKSTNVEAASVDNSEIHADASLTAVSSVNLDNPVIEPVAISLIGSKRDTNAEVEVSSLSKREVRKTNTDGLISVQSKVIKKELLESSLAEAGSPLLEATIAQSSNSNSTEIGMSYQNTVLLESNNTERQVSKAEIVMEHKETELVETVSSASEPVVLVENISQTSNNTIESGKNMGVQSQAGAKQILGVEQSSKVSTPTSRQIMGVGLLTLVLGSALGLLKKRRK.

Residues 1 to 32 (MNIQERFSLRKSAVGLVSVSLLCAIYTSTVAA) form the signal peptide. The active-site Nucleophile is cysteine 195. 4 disordered regions span residues 518–544 (PDLPVGDRSTVSDVDSLSSQETSSTNL), 725–749 (EKDSIQAGETEIAEPTSSESTNVET), 781–805 (LEKDSIQAGETEIAEPTSSESTNVE), and 839–860 (EKDSIQAGETEIAEPTSSESTS). Residues 526 to 544 (STVSDVDSLSSQETSSTNL) are compositionally biased toward polar residues. Low complexity-rich tracts occupy residues 738–749 (EPTSSESTNVET) and 795–805 (EPTSSESTNVE). A helical transmembrane segment spans residues 1119 to 1136 (IMGVGLLTLVLGSALGLL).

Belongs to the peptidase C66 family.

Its subcellular location is the cell membrane. The protein localises to the secreted. IgM cleavage is inhibited by iodoacetamide but not by AEBSF, bestatin, E-64, Z-LVG-CHN(2), or EDTA. In terms of biological role, catalyzes the specific cleavage of porcine IgM bound to the bacterial surface. Can degrade only IgM but neither IgG nor IgA, and is host specific, as it exclusively cleaves porcine IgM but not IgM from six other species, including human, mouse and a closely related member of the Suidae family. Promotes survival in porcine blood. Is thus involved in a so-far-unknown mechanism of host-pathogen interaction at an early stage of the host immune response. The chain is IgM protease (ide) from Streptococcus suis (strain P1/7).